The sequence spans 216 residues: Cyclo(L-leucyl-L-leucyl) synthase (216 aa).

Ser14 serves as the catalytic Nucleophile. Residues Asn17, 155 to 159 (YIFDE), and Tyr179 contribute to the substrate site.

The protein belongs to the CDPS family.

The enzyme catalyses 2 L-leucyl-tRNA(Leu) = cyclo(L-leucyl-L-leucyl) + 2 tRNA(Leu) + 2 H(+). In terms of biological role, it uses activated amino acids in the form of aminoacyl-tRNAs (aa-tRNAs) as substrates to catalyze the ATP-independent formation of cyclodipeptides which are intermediates in diketopiperazine (DKP) biosynthetic pathways. Catalyzes the formation of cyclo(L-Leu-L-Leu) (cLL) from L-leucyl-tRNA(Leu). Can incorporate various nonpolar residues, such as L-leucine and L-methionine, into cyclodipeptides. This is Cyclo(L-leucyl-L-leucyl) synthase from Corynebacterium jeikeium (strain K411).